A 628-amino-acid chain; its full sequence is 69 kDa protein (628 aa).

Disordered stretches follow at residues 1-24 (MSNG…LSAS), 141-492 (HFHA…SDPV), and 537-628 (VLPT…PDTD). Composition is skewed to polar residues over residues 166–178 (RTSV…TTRG) and 295–305 (TGHIPSTTASR). Pro residues predominate over residues 433–451 (EGPPPPPRRLPSPATPPQS). Over residues 586–596 (PSGPLRSQSPS) the composition is skewed to polar residues.

Belongs to the tymoviridae protein p69 family.

Its function is as follows. Acts as a suppressor of RNA-mediated gene silencing, also known as post-transcriptional gene silencing (PTGS), a mechanism of plant viral defense that limits the accumulation of viral RNAs. This chain is 69 kDa protein, found in Turnip yellow mosaic virus (isolate Australia).